The primary structure comprises 715 residues: Scinderin (715 aa).

Residues 1 to 363 (MAQGLYHEEF…DGFGKVYVTE (363 aa)) are actin-severing. Residues 27–77 (LELVPVPESAYGNFYVGDAYLVLHTTQASRGFTYRLHFWLGKECTQDESTA) form a Gelsolin-like 1 repeat. Tyrosine 102 carries the phosphotyrosine modification. Residues 112–119 (KGGLKYKA) and 138–146 (RLLHVKGRR) contribute to the a 1,2-diacyl-sn-glycero-3-phospho-(1D-myo-inositol-4,5-bisphosphate) site. Gelsolin-like repeat units follow at residues 148–188 (VRAT…YERL), 265–307 (LVAE…QERK), 398–451 (VQIW…DELT), and 523–564 (TRIM…EEEK). The interval 364 to 715 (KVAHVKQIPF…WFLGWDSSRW (352 aa)) is actin-binding, Ca-sensitive. The ca(2+)-dependent actin binding stretch occupies residues 364-715 (KVAHVKQIPF…WFLGWDSSRW (352 aa)). The Ca(2+) site is built by asparagine 538, aspartate 539, and glutamate 562. Tyrosine 599 is modified (phosphotyrosine). One copy of the Gelsolin-like 6 repeat lies at 626 to 668 (FIIEEVPGEFTQDDLAEDDVMLLDAWEQIFIWIGKDANEVEKS). Ca(2+) contacts are provided by aspartate 643, aspartate 644, and glutamate 666.

Belongs to the villin/gelsolin family. Post-translationally, the N-terminus is blocked. In the adrenal gland, expressed in the medulla but, in the cortex, found only in diffuse parts.

Its subcellular location is the cytoplasm. The protein localises to the cytoskeleton. It localises to the cell projection. It is found in the podosome. In terms of biological role, ca(2+)-dependent actin filament-severing protein that has a regulatory function in exocytosis by affecting the organization of the microfilament network underneath the plasma membrane. In vitro, also has barbed end capping and nucleating activities in the presence of Ca(2+). Severing activity is inhibited by phosphatidylinositol 4,5-bis-phosphate (PIP2). Required for megakaryocyte differentiation, maturation, polyploidization and apoptosis with the release of platelet-like particles. Plays a role in osteoclastogenesis (OCG) and actin cytoskeletal organization in osteoclasts. Regulates chondrocyte proliferation and differentiation. Inhibits cell proliferation and tumorigenesis. Signaling is mediated by MAPK, p38 and JNK pathways. This Bos taurus (Bovine) protein is Scinderin.